The following is a 124-amino-acid chain: S-adenosylmethionine decarboxylase proenzyme (124 aa).

S63 serves as the catalytic Schiff-base intermediate with substrate; via pyruvic acid. S63 is modified (pyruvic acid (Ser); by autocatalysis). The Proton acceptor; for processing activity role is filled by H68. Residue C83 is the Proton donor; for catalytic activity of the active site.

The protein belongs to the prokaryotic AdoMetDC family. Type 1 subfamily. As to quaternary structure, heterotetramer of two alpha and two beta chains arranged as a dimer of alpha/beta heterodimers. Pyruvate serves as cofactor. Post-translationally, is synthesized initially as an inactive proenzyme. Formation of the active enzyme involves a self-maturation process in which the active site pyruvoyl group is generated from an internal serine residue via an autocatalytic post-translational modification. Two non-identical subunits are generated from the proenzyme in this reaction, and the pyruvate is formed at the N-terminus of the alpha chain, which is derived from the carboxyl end of the proenzyme. The post-translation cleavage follows an unusual pathway, termed non-hydrolytic serinolysis, in which the side chain hydroxyl group of the serine supplies its oxygen atom to form the C-terminus of the beta chain, while the remainder of the serine residue undergoes an oxidative deamination to produce ammonia and the pyruvoyl group blocking the N-terminus of the alpha chain.

It carries out the reaction S-adenosyl-L-methionine + H(+) = S-adenosyl 3-(methylsulfanyl)propylamine + CO2. The protein operates within amine and polyamine biosynthesis; S-adenosylmethioninamine biosynthesis; S-adenosylmethioninamine from S-adenosyl-L-methionine: step 1/1. Its function is as follows. Catalyzes the decarboxylation of S-adenosylmethionine to S-adenosylmethioninamine (dcAdoMet), the propylamine donor required for the synthesis of the polyamines spermine and spermidine from the diamine putrescine. This chain is S-adenosylmethionine decarboxylase proenzyme, found in Geobacillus sp. (strain WCH70).